Reading from the N-terminus, the 125-residue chain is Large ribosomal subunit protein bL17 (125 aa).

This sequence belongs to the bacterial ribosomal protein bL17 family. Part of the 50S ribosomal subunit. Contacts protein L32.

The polypeptide is Large ribosomal subunit protein bL17 (Blochmanniella floridana).